Here is a 494-residue protein sequence, read N- to C-terminus: Nuclear distribution protein PAC1 (494 aa).

The 33-residue stretch at 14–46 folds into the LisH domain; that stretch reads QKNELDKSVLRYLNWNYKQTVRHEHAQDYESVR. Positions 90-123 form a coiled coil; the sequence is NSIVRLQKKIIELEQNTETLVSQIKDLNTQVSEL. 7 WD repeats span residues 153–192, 196–244, 251–292, 295–334, 347–395, 415–454, and 457–492; these read NVES…IPLA, SHTK…CKFQ, GHEH…SLKT, PHSQ…SVGT, HFIE…LMAH, GHLS…HVWE, and HTGF…SNVF.

It belongs to the WD repeat LIS1/nudF family. In terms of assembly, self-associates. Interacts with NDL1 and dynein.

The protein localises to the cytoplasm. It localises to the cytoskeleton. The protein resides in the spindle pole. Its function is as follows. Positively regulates the activity of the minus-end directed microtubule motor protein dynein. Plays a central role in positioning the mitotic spindle at the bud neck during cell division. Targets cytoplasmic dynein to microtubule plus ends, thereby promoting dynein-mediated microtubule sliding along the bud cortex and consequently the movement of the mitotic spindle to the bud neck. The polypeptide is Nuclear distribution protein PAC1 (Saccharomyces cerevisiae (strain JAY291) (Baker's yeast)).